Here is a 381-residue protein sequence, read N- to C-terminus: Mannitol-1-phosphate 5-dehydrogenase (381 aa).

Thr-3–Gly-14 lines the NAD(+) pocket.

Belongs to the mannitol dehydrogenase family.

It carries out the reaction D-mannitol 1-phosphate + NAD(+) = beta-D-fructose 6-phosphate + NADH + H(+). This Aeromonas salmonicida (strain A449) protein is Mannitol-1-phosphate 5-dehydrogenase.